We begin with the raw amino-acid sequence, 242 residues long: Venom nerve growth factor 3 (242 aa).

Residues 1 to 18 (MSMLCYTLIIAFLIGIWA) form the signal peptide. Positions 19–125 (APKSEDNVPL…ALNRNIRSKR (107 aa)) are excised as a propeptide. Basic and acidic residues predominate over residues 48–66 (LKTSRNTDQRHPAPKKAED). Positions 48 to 69 (LKTSRNTDQRHPAPKKAEDQEL) are disordered. 3 disulfide bridges follow: C139–C203, C181–C231, and C191–C233. Residue N147 is glycosylated (N-linked (GlcNAc...) asparagine).

Belongs to the NGF-beta family. As to quaternary structure, homodimer; non-covalently linked. In terms of tissue distribution, expressed by the venom gland.

It is found in the secreted. In terms of biological role, nerve growth factor is important for the development and maintenance of the sympathetic and sensory nervous systems. It stimulates division and differentiation of sympathetic and embryonic sensory neurons as well as basal forebrain cholinergic neurons in the brain. Its relevance in the snake venom is not clear. However, it has been shown to inhibit metalloproteinase-dependent proteolysis of platelet glycoprotein Ib alpha, suggesting a metalloproteinase inhibition to prevent metalloprotease autodigestion and/or protection against prey proteases. Binds a lipid between the two protein chains in the homodimer. The lipid-bound form promotes histamine relase from mouse mast cells, contrary to the lipid-free form. This is Venom nerve growth factor 3 from Demansia vestigiata (Lesser black whip snake).